The following is a 31-amino-acid chain: Cytochrome b6-f complex subunit 6 (31 aa).

The helical transmembrane segment at 4 to 24 (IISYFGFLFGALTLALILFIG) threads the bilayer.

The protein belongs to the PetL family. In terms of assembly, the 4 large subunits of the cytochrome b6-f complex are cytochrome b6, subunit IV (17 kDa polypeptide, PetD), cytochrome f and the Rieske protein, while the 4 small subunits are PetG, PetL, PetM and PetN. The complex functions as a dimer.

It is found in the plastid. It localises to the chloroplast thylakoid membrane. Functionally, component of the cytochrome b6-f complex, which mediates electron transfer between photosystem II (PSII) and photosystem I (PSI), cyclic electron flow around PSI, and state transitions. PetL is important for photoautotrophic growth as well as for electron transfer efficiency and stability of the cytochrome b6-f complex. The protein is Cytochrome b6-f complex subunit 6 of Physcomitrium patens (Spreading-leaved earth moss).